A 362-amino-acid chain; its full sequence is Methylthioribose-1-phosphate isomerase (362 aa).

Residue Asp252 is the Proton donor of the active site.

Belongs to the eIF-2B alpha/beta/delta subunits family. MtnA subfamily.

The protein localises to the cytoplasm. It localises to the nucleus. The catalysed reaction is 5-(methylsulfanyl)-alpha-D-ribose 1-phosphate = 5-(methylsulfanyl)-D-ribulose 1-phosphate. Its pathway is amino-acid biosynthesis; L-methionine biosynthesis via salvage pathway; L-methionine from S-methyl-5-thio-alpha-D-ribose 1-phosphate: step 1/6. Catalyzes the interconversion of methylthioribose-1-phosphate (MTR-1-P) into methylthioribulose-1-phosphate (MTRu-1-P). This chain is Methylthioribose-1-phosphate isomerase, found in Drosophila pseudoobscura pseudoobscura (Fruit fly).